Here is a 431-residue protein sequence, read N- to C-terminus: Na(+)/H(+) antiporter NhaA 1 (431 aa).

11 helical membrane-spanning segments follow: residues 17 to 37 (LSGI…NSNF), 56 to 76 (FIIS…LFFL), 98 to 118 (MFPF…YIAL), 123 to 143 (FIGF…MLIL), 154 to 174 (LFLV…VATV), 182 to 202 (EYFL…YFDV), 209 to 229 (LFLG…ATIA), 301 to 321 (FSAF…LLDF), 329 to 349 (MIVL…IFGF), 373 to 393 (VGFI…LAFI), and 400 to 420 (AIKI…MILI).

It belongs to the NhaA Na(+)/H(+) (TC 2.A.33) antiporter family.

The protein resides in the cell inner membrane. The enzyme catalyses Na(+)(in) + 2 H(+)(out) = Na(+)(out) + 2 H(+)(in). In terms of biological role, na(+)/H(+) antiporter that extrudes sodium in exchange for external protons. The protein is Na(+)/H(+) antiporter NhaA 1 of Aliarcobacter butzleri (strain RM4018) (Arcobacter butzleri).